A 398-amino-acid polypeptide reads, in one-letter code: Probable beta-1,3-galactosyltransferase 5 (398 aa).

Residues L11–T31 form a helical; Signal-anchor for type II membrane protein membrane-spanning segment. N-linked (GlcNAc...) asparagine glycans are attached at residues N110, N115, and N206.

Belongs to the glycosyltransferase 31 family. Mn(2+) is required as a cofactor.

The protein resides in the golgi apparatus membrane. Its pathway is protein modification; protein glycosylation. Its function is as follows. Beta-1,3-galactosyltransferase that transfers galactose from UDP-galactose to substrates with a terminal glycosyl residue. In Arabidopsis thaliana (Mouse-ear cress), this protein is Probable beta-1,3-galactosyltransferase 5 (B3GALT5).